A 188-amino-acid polypeptide reads, in one-letter code: Large ribosomal subunit protein eL18A (188 aa).

Residues 153-188 form a disordered region; sequence GKAPSTPHSRTKPYVLSKGRKFERARGRRASRGYKN. Residues 178 to 188 are compositionally biased toward basic residues; sequence RGRRASRGYKN.

It belongs to the eukaryotic ribosomal protein eL18 family. In terms of assembly, component of the large ribosomal subunit.

It is found in the cytoplasm. Functionally, component of the large ribosomal subunit. The ribosome is a large ribonucleoprotein complex responsible for the synthesis of proteins in the cell. This is Large ribosomal subunit protein eL18A (rpl18-a) from Xenopus laevis (African clawed frog).